The sequence spans 368 residues: Interferon-stimulated 20 kDa exonuclease-like 2 (368 aa).

Disordered stretches follow at residues 33 to 107 and 127 to 187; these read FLEQ…APSK and PKTK…PTVP. The segment covering 42–54 has biased composition (polar residues); the sequence is KKNQPPNKVSKLN. Residues 77–96 show a composition bias toward basic and acidic residues; sequence KKKEAAASKRDSERSKDKKA. Residues 131 to 145 are compositionally biased toward basic residues; sequence STQKKGSKKKSLKKK. One can recognise an Exonuclease domain in the interval 194-368; that stretch reads MVAIDCEMVG…QHLAQNPPEN (175 aa).

It localises to the nucleus. Its subcellular location is the nucleolus. Its function is as follows. 3'-&gt; 5'-exoribonuclease involved in ribosome biogenesis in the processing of the 12S pre-rRNA. Displays a strong specificity for a 3'-end containing a free hydroxyl group. This Mus musculus (Mouse) protein is Interferon-stimulated 20 kDa exonuclease-like 2 (Isg20l2).